The sequence spans 415 residues: Serine--tRNA ligase (415 aa).

Residue 231 to 233 (TAE) coordinates L-serine. Position 262–264 (262–264 (RSE)) interacts with ATP. L-serine is bound at residue Glu285. An ATP-binding site is contributed by 349–352 (EISS). An L-serine-binding site is contributed by Ser383.

It belongs to the class-II aminoacyl-tRNA synthetase family. Type-1 seryl-tRNA synthetase subfamily. In terms of assembly, homodimer. The tRNA molecule binds across the dimer.

It is found in the cytoplasm. It carries out the reaction tRNA(Ser) + L-serine + ATP = L-seryl-tRNA(Ser) + AMP + diphosphate + H(+). The catalysed reaction is tRNA(Sec) + L-serine + ATP = L-seryl-tRNA(Sec) + AMP + diphosphate + H(+). The protein operates within aminoacyl-tRNA biosynthesis; selenocysteinyl-tRNA(Sec) biosynthesis; L-seryl-tRNA(Sec) from L-serine and tRNA(Sec): step 1/1. Functionally, catalyzes the attachment of serine to tRNA(Ser). Is also able to aminoacylate tRNA(Sec) with serine, to form the misacylated tRNA L-seryl-tRNA(Sec), which will be further converted into selenocysteinyl-tRNA(Sec). In Helicobacter pylori (strain HPAG1), this protein is Serine--tRNA ligase.